Reading from the N-terminus, the 76-residue chain is ATP synthase subunit 9, mitochondrial (76 aa).

Helical transmembrane passes span Gly-13–Gln-35 and Phe-50–Leu-72.

The protein belongs to the ATPase C chain family. In terms of assembly, F-type ATPases have 2 components, CF(1) - the catalytic core - and CF(0) - the membrane proton channel. In yeast, the dimeric form of ATP synthase consists of 18 polypeptides: alpha, beta, gamma, delta, epsilon, 4 (B), 5 (OSCP), 6 (A), 8, 9 (C), d, E (Tim11), f, g, h, i, j and k.

The protein resides in the mitochondrion membrane. Functionally, mitochondrial membrane ATP synthase (F(1)F(0) ATP synthase or Complex V) produces ATP from ADP in the presence of a proton gradient across the membrane which is generated by electron transport complexes of the respiratory chain. F-type ATPases consist of two structural domains, F(1) - containing the extramembraneous catalytic core and F(0) - containing the membrane proton channel, linked together by a central stalk and a peripheral stalk. During catalysis, ATP synthesis in the catalytic domain of F(1) is coupled via a rotary mechanism of the central stalk subunits to proton translocation. Part of the complex F(0) domain. A homomeric c-ring of probably 10 subunits is part of the complex rotary element. The sequence is that of ATP synthase subunit 9, mitochondrial (ATP9) from Eremothecium gossypii (strain ATCC 10895 / CBS 109.51 / FGSC 9923 / NRRL Y-1056) (Yeast).